A 1962-amino-acid chain; its full sequence is PIII-type proteinase (1962 aa).

Positions 1 to 33 (MQRKKKGLSILLAGTVALGALAVLPVGEIQAKA) are cleaved as a signal peptide. Positions 34–187 (AISQQTKGSS…VTLAKVYYPT (154 aa)) are excised as a propeptide. Residues 191-697 (ANSMANVQAV…AGLVDVKAAI (507 aa)) form the Peptidase S8 domain. Catalysis depends on charge relay system residues Asp-217, His-281, and Ser-620. Residues 1796 to 1938 (GKGDGTTGTS…KTGETTERPA (143 aa)) are disordered. Residues 1797–1812 (KGDGTTGTSDKGGGQG) show a composition bias toward gly residues. Polar residues-rich tracts occupy residues 1856–1865 (RNGQLTSGTS) and 1890–1903 (SQPS…TNPA). The LPXTG sorting signal signature appears at 1927 to 1931 (LPKTG). Thr-1930 carries the pentaglycyl murein peptidoglycan amidated threonine modification. Residues 1931–1962 (GETTERPAFGFLGVIVVSLMGVLGLKRKQREE) constitute a propeptide, removed by sortase.

It belongs to the peptidase S8 family.

The protein resides in the secreted. It localises to the cell wall. The enzyme catalyses Endopeptidase activity with very broad specificity, although some subsite preference have been noted, e.g. large hydrophobic residues in the P1 and P4 positions, and Pro in the P2 position. Best known for its action on caseins, although it has been shown to hydrolyze hemoglobin and oxidized insulin B-chain.. In terms of biological role, protease which breaks down milk proteins during the growth of the bacteria on milk. This Lactococcus lactis subsp. cremoris (strain SK11) protein is PIII-type proteinase (prtP).